Reading from the N-terminus, the 802-residue chain is Peptidyl serine alpha-galactosyltransferase (802 aa).

The first 19 residues, 1-19 (MRWDLITAIVAALVVSVLA), serve as a signal peptide directing secretion. The Extracellular portion of the chain corresponds to 20-750 (DESGQMAPYR…SEGRFSTLKL (731 aa)). N-linked (GlcNAc...) asparagine glycosylation is found at Asn214, Asn275, Asn425, and Asn637. Positions 699–741 (RNCPEPGSESTEKISVSRKVGNIETKQTQGSDETKESSGSSES) are disordered. The helical transmembrane segment at 751-771 (WVIALWLISGVGFLVVMLLVF) threads the bilayer. Topologically, residues 772-802 (STRRGRGTTRGKGYRNKRRTSYSNTGFLDTK) are cytoplasmic. Residues 777-791 (RGTTRGKGYRNKRRT) are compositionally biased toward basic residues. The segment at 777 to 802 (RGTTRGKGYRNKRRTSYSNTGFLDTK) is disordered. Polar residues predominate over residues 792 to 802 (SYSNTGFLDTK).

It is found in the endoplasmic reticulum membrane. Its function is as follows. Glycosyltransferase involved in the O-galactosylation of several proteins including extensins. Catalyzes the transfer of alpha-galactosyl to Ser residues. Hydroxylation of proline residues adjacent to the serine acceptor is required for activity. The polypeptide is Peptidyl serine alpha-galactosyltransferase (Arabidopsis thaliana (Mouse-ear cress)).